A 334-amino-acid chain; its full sequence is MLTYAQAGVDEEKTAKALRAIIDAARRTFKFRMNKIGEPGDIGHYSALLDFKDFYLAITTDGVGTKILVAEAVNKFDTIGIDMIAMNVNDLICVGAEPVALVDYLAVKEPNEDVFQQIAKGLYEGAKEAGIAIVGGETAVMPDLINGYDLAGTAVGIVEKDKVVTGEKIKPDDIVIGISSSGIHSNGLTLARKLLIPKYGLDYEYNGKKLWEWLLEPTRIYVKPILKLINEVEVHGLAHITGGGLLNLKRLTKYGFELEMPPIDGIFKLIYENGVPLEEMFRVFNMGVGFMVIVPQEEKENALQILNKYYESFELGKVIKEPEKIKVKNYGITL.

Belongs to the AIR synthase family.

The protein localises to the cytoplasm. It catalyses the reaction 2-formamido-N(1)-(5-O-phospho-beta-D-ribosyl)acetamidine + ATP = 5-amino-1-(5-phospho-beta-D-ribosyl)imidazole + ADP + phosphate + H(+). It participates in purine metabolism; IMP biosynthesis via de novo pathway; 5-amino-1-(5-phospho-D-ribosyl)imidazole from N(2)-formyl-N(1)-(5-phospho-D-ribosyl)glycinamide: step 2/2. The protein is Phosphoribosylformylglycinamidine cyclo-ligase of Pyrococcus horikoshii (strain ATCC 700860 / DSM 12428 / JCM 9974 / NBRC 100139 / OT-3).